Here is a 438-residue protein sequence, read N- to C-terminus: Protein translocase subunit SecY (438 aa).

The next 10 helical transmembrane spans lie at 18–38, 76–96, 121–141, 154–174, 177–197, 212–232, 269–289, 315–335, 375–395, and 398–418; these read ILFT…PSPG, VGVM…VVIP, IALA…GGLL, IFSL…VMWM, LITE…GIAA, GVIF…VVFV, VIPV…TQLV, PVYI…YVSV, LPGS…LQIG, and GEVQ…GVGL.

Belongs to the SecY/SEC61-alpha family. Component of the Sec protein translocase complex. Heterotrimer consisting of SecY, SecE and SecG subunits. The heterotrimers can form oligomers, although 1 heterotrimer is thought to be able to translocate proteins. Interacts with the ribosome. Interacts with SecDF, and other proteins may be involved. Interacts with SecA.

The protein resides in the cell membrane. The central subunit of the protein translocation channel SecYEG. Consists of two halves formed by TMs 1-5 and 6-10. These two domains form a lateral gate at the front which open onto the bilayer between TMs 2 and 7, and are clamped together by SecE at the back. The channel is closed by both a pore ring composed of hydrophobic SecY resides and a short helix (helix 2A) on the extracellular side of the membrane which forms a plug. The plug probably moves laterally to allow the channel to open. The ring and the pore may move independently. This Mycobacterium leprae (strain TN) protein is Protein translocase subunit SecY.